Here is a 318-residue protein sequence, read N- to C-terminus: Methionyl-tRNA formyltransferase (318 aa).

Residue 111-114 (SLLP) coordinates (6S)-5,6,7,8-tetrahydrofolate.

This sequence belongs to the Fmt family.

The enzyme catalyses L-methionyl-tRNA(fMet) + (6R)-10-formyltetrahydrofolate = N-formyl-L-methionyl-tRNA(fMet) + (6S)-5,6,7,8-tetrahydrofolate + H(+). Attaches a formyl group to the free amino group of methionyl-tRNA(fMet). The formyl group appears to play a dual role in the initiator identity of N-formylmethionyl-tRNA by promoting its recognition by IF2 and preventing the misappropriation of this tRNA by the elongation apparatus. The chain is Methionyl-tRNA formyltransferase from Chlorobium limicola (strain DSM 245 / NBRC 103803 / 6330).